A 132-amino-acid polypeptide reads, in one-letter code: Hemoglobin subunit beta-1 (132 aa).

In terms of domain architecture, Globin spans 1–132; the sequence is WSKIDIDVCG…VVSALGRQYH (132 aa). Heme b is bound by residues His-49 and His-78.

The protein belongs to the globin family. As to quaternary structure, hb 1 is a heterotetramer of two alpha-1 and two beta-1 chains. Hb 2 is a heterotetramer of two alpha-2 and two beta-1 chains. In terms of tissue distribution, red blood cells.

Its function is as follows. Involved in oxygen transport from gills to the various peripheral tissues. This Arctogadus glacialis (Arctic cod) protein is Hemoglobin subunit beta-1 (hbb1).